Reading from the N-terminus, the 202-residue chain is LexA repressor 2 (202 aa).

Residues 28 to 48 (LADIATRFGFASRSVARKHIT) constitute a DNA-binding region (H-T-H motif). Catalysis depends on for autocatalytic cleavage activity residues Ser123 and Lys160.

It belongs to the peptidase S24 family. In terms of assembly, homodimer.

The catalysed reaction is Hydrolysis of Ala-|-Gly bond in repressor LexA.. Represses a number of genes involved in the response to DNA damage (SOS response), including recA and lexA. In the presence of single-stranded DNA, RecA interacts with LexA causing an autocatalytic cleavage which disrupts the DNA-binding part of LexA, leading to derepression of the SOS regulon and eventually DNA repair. The sequence is that of LexA repressor 2 from Pseudomonas putida (strain ATCC 47054 / DSM 6125 / CFBP 8728 / NCIMB 11950 / KT2440).